The sequence spans 387 residues: Phosphoglycerate kinase (387 aa).

Residues 21–23 (DLN), Arg36, 59–62 (HLGR), Arg113, and Arg146 each bind substrate. ATP is bound by residues Lys197, Glu314, and 340–343 (GGDT).

This sequence belongs to the phosphoglycerate kinase family. Monomer.

It localises to the cytoplasm. The catalysed reaction is (2R)-3-phosphoglycerate + ATP = (2R)-3-phospho-glyceroyl phosphate + ADP. Its pathway is carbohydrate degradation; glycolysis; pyruvate from D-glyceraldehyde 3-phosphate: step 2/5. This chain is Phosphoglycerate kinase, found in Pseudomonas fluorescens (strain SBW25).